The sequence spans 626 residues: Threonine--tRNA ligase (626 aa).

An editing domain region spans residues 1 to 145; sequence MRMLLIHSDY…SRTIVPEKAV (145 aa). Residues 207 to 506 are catalytic; the sequence is PHVRLMLEQE…QEKGIKPMYP (300 aa). The Zn(2+) site is built by Cys-299, His-351, and His-475.

The protein belongs to the class-II aminoacyl-tRNA synthetase family. In terms of assembly, homodimer. Zn(2+) is required as a cofactor.

The protein localises to the cytoplasm. The enzyme catalyses tRNA(Thr) + L-threonine + ATP = L-threonyl-tRNA(Thr) + AMP + diphosphate + H(+). Its function is as follows. Catalyzes the attachment of threonine to tRNA(Thr) in a two-step reaction: L-threonine is first activated by ATP to form Thr-AMP and then transferred to the acceptor end of tRNA(Thr). Also edits incorrectly charged L-seryl-tRNA(Thr). This is Threonine--tRNA ligase from Thermococcus kodakarensis (strain ATCC BAA-918 / JCM 12380 / KOD1) (Pyrococcus kodakaraensis (strain KOD1)).